The chain runs to 680 residues: DNA-directed RNA polymerase subunit beta' (680 aa).

Residues cysteine 69, cysteine 71, cysteine 87, and cysteine 90 each contribute to the Zn(2+) site. The Mg(2+) site is built by aspartate 489, aspartate 491, and aspartate 493.

The protein belongs to the RNA polymerase beta' chain family. RpoC1 subfamily. In plastids the minimal PEP RNA polymerase catalytic core is composed of four subunits: alpha, beta, beta', and beta''. When a (nuclear-encoded) sigma factor is associated with the core the holoenzyme is formed, which can initiate transcription. It depends on Mg(2+) as a cofactor. Requires Zn(2+) as cofactor.

It is found in the plastid. It localises to the chloroplast. It catalyses the reaction RNA(n) + a ribonucleoside 5'-triphosphate = RNA(n+1) + diphosphate. Its function is as follows. DNA-dependent RNA polymerase catalyzes the transcription of DNA into RNA using the four ribonucleoside triphosphates as substrates. In Aethionema grandiflorum (Persian stone-cress), this protein is DNA-directed RNA polymerase subunit beta'.